We begin with the raw amino-acid sequence, 399 residues long: Chorismate synthase (399 aa).

2 residues coordinate NADP(+): Arg40 and Arg46. FMN-binding positions include 129–131 (RSS), 257–258 (QA), Gly302, 317–321 (KPISS), and Arg343.

Belongs to the chorismate synthase family. As to quaternary structure, homotetramer. Requires FMNH2 as cofactor.

It carries out the reaction 5-O-(1-carboxyvinyl)-3-phosphoshikimate = chorismate + phosphate. It functions in the pathway metabolic intermediate biosynthesis; chorismate biosynthesis; chorismate from D-erythrose 4-phosphate and phosphoenolpyruvate: step 7/7. Its function is as follows. Catalyzes the anti-1,4-elimination of the C-3 phosphate and the C-6 proR hydrogen from 5-enolpyruvylshikimate-3-phosphate (EPSP) to yield chorismate, which is the branch point compound that serves as the starting substrate for the three terminal pathways of aromatic amino acid biosynthesis. This reaction introduces a second double bond into the aromatic ring system. The chain is Chorismate synthase from Chlorobium chlorochromatii (strain CaD3).